A 96-amino-acid polypeptide reads, in one-letter code: Co-chaperonin GroES (96 aa).

Belongs to the GroES chaperonin family. As to quaternary structure, heptamer of 7 subunits arranged in a ring. Interacts with the chaperonin GroEL.

The protein localises to the cytoplasm. Functionally, together with the chaperonin GroEL, plays an essential role in assisting protein folding. The GroEL-GroES system forms a nano-cage that allows encapsulation of the non-native substrate proteins and provides a physical environment optimized to promote and accelerate protein folding. GroES binds to the apical surface of the GroEL ring, thereby capping the opening of the GroEL channel. In Citrifermentans bemidjiense (strain ATCC BAA-1014 / DSM 16622 / JCM 12645 / Bem) (Geobacter bemidjiensis), this protein is Co-chaperonin GroES.